Reading from the N-terminus, the 143-residue chain is Putative pre-16S rRNA nuclease (143 aa).

The protein belongs to the YqgF nuclease family.

The protein resides in the cytoplasm. Could be a nuclease involved in processing of the 5'-end of pre-16S rRNA. The polypeptide is Putative pre-16S rRNA nuclease (Ralstonia pickettii (strain 12J)).